We begin with the raw amino-acid sequence, 135 residues long: uncharacterized protein (135 aa).

The protein belongs to the asp23 family.

This is an uncharacterized protein from Bacillus subtilis (strain 168).